We begin with the raw amino-acid sequence, 158 residues long: Pyruvoyl-dependent arginine decarboxylase (158 aa).

Ser44 carries the pyruvic acid (Ser) modification.

It belongs to the PdaD family. Requires pyruvate as cofactor.

The catalysed reaction is L-arginine + H(+) = agmatine + CO2. The protein is Pyruvoyl-dependent arginine decarboxylase of Pyrococcus abyssi (strain GE5 / Orsay).